A 156-amino-acid polypeptide reads, in one-letter code: Cyanate hydratase (156 aa).

Catalysis depends on residues arginine 96, glutamate 99, and serine 122.

The protein belongs to the cyanase family.

It carries out the reaction cyanate + hydrogencarbonate + 3 H(+) = NH4(+) + 2 CO2. Catalyzes the reaction of cyanate with bicarbonate to produce ammonia and carbon dioxide. The protein is Cyanate hydratase of Pseudomonas putida (strain W619).